We begin with the raw amino-acid sequence, 223 residues long: Urease accessory protein UreF (223 aa).

It belongs to the UreF family. In terms of assembly, ureD, UreF and UreG form a complex that acts as a GTP-hydrolysis-dependent molecular chaperone, activating the urease apoprotein by helping to assemble the nickel containing metallocenter of UreC. The UreE protein probably delivers the nickel.

It localises to the cytoplasm. In terms of biological role, required for maturation of urease via the functional incorporation of the urease nickel metallocenter. This Agrobacterium fabrum (strain C58 / ATCC 33970) (Agrobacterium tumefaciens (strain C58)) protein is Urease accessory protein UreF.